We begin with the raw amino-acid sequence, 494 residues long: Glutamate--tRNA ligase (494 aa).

The 'HIGH' region signature appears at 9-19 (PSPTGDPHVGT). The short motif at 250-254 (KLSKR) is the 'KMSKS' region element. K253 contacts ATP.

Belongs to the class-I aminoacyl-tRNA synthetase family. Glutamate--tRNA ligase type 1 subfamily. As to quaternary structure, monomer.

It localises to the cytoplasm. It catalyses the reaction tRNA(Glu) + L-glutamate + ATP = L-glutamyl-tRNA(Glu) + AMP + diphosphate. Functionally, catalyzes the attachment of glutamate to tRNA(Glu) in a two-step reaction: glutamate is first activated by ATP to form Glu-AMP and then transferred to the acceptor end of tRNA(Glu). The polypeptide is Glutamate--tRNA ligase (Alcanivorax borkumensis (strain ATCC 700651 / DSM 11573 / NCIMB 13689 / SK2)).